The primary structure comprises 427 residues: MQVLESQKLSGHIRVSGAKNSSLVLMAAALLADRSVFLSNVPLLTDVEVMSKLLVSMGVELRRNKNQLEIMTSGLSLFSKDLSCEAFHSLRASFFCIGPLLARFGEAKIPLPGGCRIGARPIDEHIQALKALGARVEIQNDYVVAKAISPQKRLIGARIRFNCKSVGATETILMAATLSQGTTILENTAEEPEIQDLATMLNEMGAKIQGAGTSQITIEGVDRLKGCSYTVMPDRIEAGTFLVAAAITRSPLTISPVVPEHLEAVILKLQECGCLIEYSGNTLSVIPRKNLQAVDITTRPFPGFPTDLQAPFMALMTTVKGISKIQETVFENRMQHVGELQRMGATIVLEGNTAVVIGGNNLKATSVTGGDLRSCAAMVLASLAANGTSVIQGLEHLDRGYEDFAEKLNAVGANISRTHSVPLSSQE.

19 to 20 (KN) lines the phosphoenolpyruvate pocket. Arginine 91 is a UDP-N-acetyl-alpha-D-glucosamine binding site. Cysteine 115 functions as the Proton donor in the catalytic mechanism. At cysteine 115 the chain carries 2-(S-cysteinyl)pyruvic acid O-phosphothioketal. UDP-N-acetyl-alpha-D-glucosamine contacts are provided by aspartate 307 and valine 329.

This sequence belongs to the EPSP synthase family. MurA subfamily.

The protein localises to the cytoplasm. It carries out the reaction phosphoenolpyruvate + UDP-N-acetyl-alpha-D-glucosamine = UDP-N-acetyl-3-O-(1-carboxyvinyl)-alpha-D-glucosamine + phosphate. Its pathway is cell wall biogenesis; peptidoglycan biosynthesis. In terms of biological role, cell wall formation. Adds enolpyruvyl to UDP-N-acetylglucosamine. The polypeptide is UDP-N-acetylglucosamine 1-carboxyvinyltransferase 2 (Prochlorococcus marinus (strain SARG / CCMP1375 / SS120)).